An 82-amino-acid chain; its full sequence is Small ribosomal subunit protein bS16 (82 aa).

The protein belongs to the bacterial ribosomal protein bS16 family.

The sequence is that of Small ribosomal subunit protein bS16 from Blochmanniella floridana.